We begin with the raw amino-acid sequence, 127 residues long: Fluoride-specific ion channel FluC (127 aa).

The next 4 helical transmembrane spans lie at 4-24, 35-55, 71-91, and 103-123; these read LLLAVFIGGGTGSVARWMLSM, LGTLAANLLGAFIIGMGFAWF, TGFCGGLTTFSTFSAEVVFLL, and VLVNLLGSFAMTALAFWIFSA. 2 residues coordinate Na(+): Gly75 and Thr78.

It belongs to the fluoride channel Fluc/FEX (TC 1.A.43) family.

The protein localises to the cell inner membrane. It catalyses the reaction fluoride(in) = fluoride(out). Its activity is regulated as follows. Na(+) is not transported, but it plays an essential structural role and its presence is essential for fluoride channel function. In terms of biological role, fluoride-specific ion channel. Important for reducing fluoride concentration in the cell, thus reducing its toxicity. The chain is Fluoride-specific ion channel FluC from Escherichia fergusonii (strain ATCC 35469 / DSM 13698 / CCUG 18766 / IAM 14443 / JCM 21226 / LMG 7866 / NBRC 102419 / NCTC 12128 / CDC 0568-73).